A 146-amino-acid chain; its full sequence is Large ribosomal subunit protein uL15 (146 aa).

Positions 1 to 52 (MKLSNLSPKAGSKKRRRRVGRGIAAGQGASCGFGMRGQKSRSGTGTKAGFEG) are disordered. Residues 11-20 (GSKKRRRRVG) show a composition bias toward basic residues. A compositionally biased stretch (gly residues) spans 23 to 35 (IAAGQGASCGFGM).

Belongs to the universal ribosomal protein uL15 family. Part of the 50S ribosomal subunit.

Functionally, binds to the 23S rRNA. The chain is Large ribosomal subunit protein uL15 from Picosynechococcus sp. (strain ATCC 27264 / PCC 7002 / PR-6) (Agmenellum quadruplicatum).